Consider the following 370-residue polypeptide: D-alanine--D-alanine ligase (370 aa).

In terms of domain architecture, ATP-grasp spans 144-352; it reads KKIFADAGIP…YGALIERLVD (209 aa). 177 to 232 provides a ligand contact to ATP; that stretch reads EEVLTYPVFVKPANLGSSVGISKATNKTELIEAMTEAFLYDRRVVVEQGVVAREIE. Mg(2+) is bound by residues D306, E319, and N321.

It belongs to the D-alanine--D-alanine ligase family. The cofactor is Mg(2+). Mn(2+) serves as cofactor.

Its subcellular location is the cytoplasm. It carries out the reaction 2 D-alanine + ATP = D-alanyl-D-alanine + ADP + phosphate + H(+). The protein operates within cell wall biogenesis; peptidoglycan biosynthesis. Functionally, cell wall formation. This chain is D-alanine--D-alanine ligase, found in Listeria innocua serovar 6a (strain ATCC BAA-680 / CLIP 11262).